The sequence spans 217 residues: Serine acetyltransferase (217 aa).

It belongs to the transferase hexapeptide repeat family.

It localises to the cytoplasm. The enzyme catalyses L-serine + acetyl-CoA = O-acetyl-L-serine + CoA. It participates in amino-acid biosynthesis; L-cysteine biosynthesis; L-cysteine from L-serine: step 1/2. Its activity is regulated as follows. Inhibited by cysteine. In terms of biological role, catalyzes the acetylation of serine by acetyl-CoA to produce O-acetylserine (OAS). The polypeptide is Serine acetyltransferase (Bacillus pumilus (strain SAFR-032)).